The primary structure comprises 238 residues: MSDKKYNVDEGEIAKFSRIADKWWDKSGEFKTLHDINPLRLDYIDGHADLCGKRVLDVGCGGGILAESMARRGAAFVKGIDMAEQSLETARLHAALNNVADIEYECIRVEDLAEAEPHSFDVVTCMEMMEHVPDPAAIVRACAKLVKPDGMVFFSTINKNPKSYLHLIVAAEYLLKFVPKGTHDWKKFIVPAELARMCRQAGLDVADTKGMTYHVLSQTYALCDSTDVNYMFACRPAF.

Residues arginine 40, glycine 59, aspartate 81, and methionine 126 each coordinate S-adenosyl-L-methionine.

Belongs to the methyltransferase superfamily. UbiG/COQ3 family.

The enzyme catalyses a 3-demethylubiquinol + S-adenosyl-L-methionine = a ubiquinol + S-adenosyl-L-homocysteine + H(+). It carries out the reaction a 3-(all-trans-polyprenyl)benzene-1,2-diol + S-adenosyl-L-methionine = a 2-methoxy-6-(all-trans-polyprenyl)phenol + S-adenosyl-L-homocysteine + H(+). The protein operates within cofactor biosynthesis; ubiquinone biosynthesis. O-methyltransferase that catalyzes the 2 O-methylation steps in the ubiquinone biosynthetic pathway. This Neisseria meningitidis serogroup A / serotype 4A (strain DSM 15465 / Z2491) protein is Ubiquinone biosynthesis O-methyltransferase.